Here is a 491-residue protein sequence, read N- to C-terminus: Protein nucleotidyltransferase YdiU (491 aa).

Gly-94, Gly-96, Arg-97, Lys-117, Asp-129, Gly-130, Arg-180, and Arg-187 together coordinate ATP. Asp-256 functions as the Proton acceptor in the catalytic mechanism. Mg(2+) contacts are provided by Asn-257 and Asp-266. Asp-266 contributes to the ATP binding site.

It belongs to the SELO family. It depends on Mg(2+) as a cofactor. Mn(2+) serves as cofactor.

It catalyses the reaction L-seryl-[protein] + ATP = 3-O-(5'-adenylyl)-L-seryl-[protein] + diphosphate. The catalysed reaction is L-threonyl-[protein] + ATP = 3-O-(5'-adenylyl)-L-threonyl-[protein] + diphosphate. It carries out the reaction L-tyrosyl-[protein] + ATP = O-(5'-adenylyl)-L-tyrosyl-[protein] + diphosphate. The enzyme catalyses L-histidyl-[protein] + UTP = N(tele)-(5'-uridylyl)-L-histidyl-[protein] + diphosphate. It catalyses the reaction L-seryl-[protein] + UTP = O-(5'-uridylyl)-L-seryl-[protein] + diphosphate. The catalysed reaction is L-tyrosyl-[protein] + UTP = O-(5'-uridylyl)-L-tyrosyl-[protein] + diphosphate. In terms of biological role, nucleotidyltransferase involved in the post-translational modification of proteins. It can catalyze the addition of adenosine monophosphate (AMP) or uridine monophosphate (UMP) to a protein, resulting in modifications known as AMPylation and UMPylation. The protein is Protein nucleotidyltransferase YdiU of Alkaliphilus metalliredigens (strain QYMF).